The chain runs to 129 residues: UPF0325 protein SG1947 (129 aa).

The protein belongs to the UPF0325 family.

This Sodalis glossinidius (strain morsitans) protein is UPF0325 protein SG1947.